Here is a 238-residue protein sequence, read N- to C-terminus: tRNA (guanine-N(1)-)-methyltransferase (238 aa).

S-adenosyl-L-methionine is bound by residues Gly-112 and 131–136 (LGDFIL).

The protein belongs to the RNA methyltransferase TrmD family. In terms of assembly, homodimer.

The protein resides in the cytoplasm. It carries out the reaction guanosine(37) in tRNA + S-adenosyl-L-methionine = N(1)-methylguanosine(37) in tRNA + S-adenosyl-L-homocysteine + H(+). Specifically methylates guanosine-37 in various tRNAs. In Nostoc punctiforme (strain ATCC 29133 / PCC 73102), this protein is tRNA (guanine-N(1)-)-methyltransferase.